Consider the following 383-residue polypeptide: Fructose-1,6-bisphosphate aldolase/phosphatase (383 aa).

The active-site Proton acceptor; for FBP phosphatase activity is D11. Mg(2+)-binding residues include D11, H18, D52, and D53. H18 is a binding site for beta-D-fructose 1,6-bisphosphate. H18 is a binding site for dihydroxyacetone phosphate. Y90 lines the beta-D-fructose 1,6-bisphosphate pocket. Q94 provides a ligand contact to Mg(2+). Residue 103–104 participates in beta-D-fructose 1,6-bisphosphate binding; that stretch reads GN. D131 contacts Mg(2+). Beta-D-fructose 1,6-bisphosphate is bound at residue K132. K132 is a binding site for dihydroxyacetone phosphate. Y228 serves as the catalytic Proton donor/acceptor; for FBP aldolase activity. Mg(2+) contacts are provided by K231, D232, and D233. K231 (schiff-base intermediate with DHAP; for FBP aldolase activity) is an active-site residue. Residues 241–242, R265, D286, and Y347 each bind beta-D-fructose 1,6-bisphosphate; that span reads QH. Dihydroxyacetone phosphate-binding residues include R265 and D286. A disordered region spans residues 361-383; the sequence is FKKEEDVKKAKPSVYTSKDQGMD. The span at 374–383 shows a compositional bias: polar residues; it reads VYTSKDQGMD.

The protein belongs to the FBP aldolase/phosphatase family. Homooctamer; dimer of tetramers. Mg(2+) serves as cofactor.

The catalysed reaction is beta-D-fructose 1,6-bisphosphate + H2O = beta-D-fructose 6-phosphate + phosphate. The enzyme catalyses beta-D-fructose 1,6-bisphosphate = D-glyceraldehyde 3-phosphate + dihydroxyacetone phosphate. Its pathway is carbohydrate biosynthesis; gluconeogenesis. In terms of biological role, catalyzes two subsequent steps in gluconeogenesis: the aldol condensation of dihydroxyacetone phosphate (DHAP) and glyceraldehyde-3-phosphate (GA3P) to fructose-1,6-bisphosphate (FBP), and the dephosphorylation of FBP to fructose-6-phosphate (F6P). In Metallosphaera sedula (strain ATCC 51363 / DSM 5348 / JCM 9185 / NBRC 15509 / TH2), this protein is Fructose-1,6-bisphosphate aldolase/phosphatase.